The chain runs to 115 residues: Large ribosomal subunit protein uL18 (115 aa).

Residues 1 to 24 (MISKPDKNKLRQKRHTRVRGKISG) form a disordered region. The span at 10-20 (LRQKRHTRVRG) shows a compositional bias: basic residues.

Belongs to the universal ribosomal protein uL18 family. As to quaternary structure, part of the 50S ribosomal subunit; part of the 5S rRNA/L5/L18/L25 subcomplex. Contacts the 5S and 23S rRNAs.

Its function is as follows. This is one of the proteins that bind and probably mediate the attachment of the 5S RNA into the large ribosomal subunit, where it forms part of the central protuberance. The chain is Large ribosomal subunit protein uL18 from Lactococcus lactis subsp. cremoris (strain MG1363).